The sequence spans 214 residues: Non-structural protein NP-1 (214 aa).

Disordered regions lie at residues 1-85 (MSSE…TRTN) and 192-214 (ESEE…NASN). Residues 33 to 43 (SRSRSPIRRHG) show a composition bias toward basic residues. Residues 44–55 (EKNLEYAHHNNQ) are compositionally biased toward basic and acidic residues. The segment covering 56 to 71 (DNRQSSYTASKTSDQA) has biased composition (polar residues). Over residues 192 to 201 (ESEEVTDEEM) the composition is skewed to acidic residues.

Belongs to the Bocaparvovirus Non-structural protein NP-1 family.

It localises to the host nucleus. Required for the expression of the capsid proteins. Performs the splicing and internal polyadenylation of the viral capsid-encoding mRNA precursor, which allows its maturation and expression. Transactivates the viral promoter. This Human bocavirus 4 (HBoV4) protein is Non-structural protein NP-1 (NP1).